A 115-amino-acid polypeptide reads, in one-letter code: Transmembrane protein 218 (115 aa).

Transmembrane regions (helical) follow at residues 5–25, 38–58, and 81–101; these read VLGVGAGVFILALLWVAVLLL, FSVIFLFFGAVIITSVLLLFP, and YVLLAFLSAIFLGGLFLVLIH.

The protein belongs to the TMEM218 family. In terms of assembly, interacts with TMEM67.

The protein resides in the membrane. The protein localises to the cell projection. Its subcellular location is the cilium. In terms of biological role, may be involved in ciliary biogenesis or function. The polypeptide is Transmembrane protein 218 (TMEM218) (Homo sapiens (Human)).